Here is a 398-residue protein sequence, read N- to C-terminus: Phospholipase C (398 aa).

A signal peptide spans 1–26 (MKALKKVSNILCVLGLCTLMGGTSYA). Residues W27, H37, D82, H94, H152, D156, H162, H174, and E178 each coordinate Zn(2+). Residues 27-276 (WDGKKDGTGT…NEVSNGNTGD (250 aa)) form the Zn-dependent PLC domain. Residues 273–281 (NTGDNDSLT) form a linker region. Residues 282–398 (NEFNIVLKTA…TGNETYYINK (117 aa)) enclose the PLAT domain. G297, T298, D299, D319, N320, G322, N323, D324, and D363 together coordinate Ca(2+).

This sequence belongs to the bacterial zinc-metallophospholipase C family. Requires Ca(2+) as cofactor. The cofactor is Zn(2+).

It localises to the secreted. The catalysed reaction is a 1,2-diacyl-sn-glycero-3-phosphocholine + H2O = phosphocholine + a 1,2-diacyl-sn-glycerol + H(+). Its function is as follows. Bacterial hemolysins are exotoxins that attack blood cell membranes and cause cell rupture. Binds to eukaryotic membranes where it hydrolyzes phosphatidylcholine. This enzyme has 10-fold less activity towards sphingomyelin than its C.perfringens counterpart, is approximately 100-fold less hemolytic against mouse erythrocytes and at least 100-fold less toxic in mice. This Paraclostridium bifermentans (Clostridium bifermentans) protein is Phospholipase C (plc).